The sequence spans 315 residues: Beta-ketoacyl-[acyl-carrier-protein] synthase III (315 aa).

Catalysis depends on residues Cys-115 and His-244. Residues 245-249 form an ACP-binding region; the sequence is QANAR. Asn-274 is an active-site residue.

It belongs to the thiolase-like superfamily. FabH family. Homodimer.

The protein resides in the cytoplasm. It carries out the reaction malonyl-[ACP] + acetyl-CoA + H(+) = 3-oxobutanoyl-[ACP] + CO2 + CoA. The protein operates within lipid metabolism; fatty acid biosynthesis. Its function is as follows. Catalyzes the condensation reaction of fatty acid synthesis by the addition to an acyl acceptor of two carbons from malonyl-ACP. Catalyzes the first condensation reaction which initiates fatty acid synthesis and may therefore play a role in governing the total rate of fatty acid production. Possesses both acetoacetyl-ACP synthase and acetyl transacylase activities. Its substrate specificity determines the biosynthesis of branched-chain and/or straight-chain of fatty acids. The sequence is that of Beta-ketoacyl-[acyl-carrier-protein] synthase III from Rubrobacter xylanophilus (strain DSM 9941 / JCM 11954 / NBRC 16129 / PRD-1).